Here is a 334-residue protein sequence, read N- to C-terminus: MTPKIAIIGEGVIGCSTALQVAQAVPDARVTVLSDRPFEQTCSFGPAGLFRIDDIANREFGKSTFDWFAHLHRTEKGDKTGVKLLSGHIQSDSKERLEQQQKAYGDIVYNFRFLEKREILDLFPNPSEHCIHYTAFASEGNKYVPYLKFQCQARGVEFLHRKVRDLEELANEGYDVIVNCAGLSGGTLAGDDDSVYPIRGVVLDVEAHWHKHFNYKDFITFTIPKENSVVIGSVKQENRWDLEITDVDRKDILERYVALHPAMREPKILGEWSGLRPARKTIRIEKVEKKSEKSGKKYTVVHHYGHGGNGFTLGWGTAVEATKLVKSALNSSKL.

D35, R36, S43, G307, and T312 together coordinate FAD. The Microbody targeting signal motif lies at S332–L334.

The protein belongs to the DAMOX/DASOX family. The cofactor is FAD. As to expression, expressed in the intestinal cells, hypodermis and in unidentified cells in the head in adult hermaphrodites.

The protein localises to the peroxisome matrix. It carries out the reaction D-aspartate + O2 + H2O = oxaloacetate + H2O2 + NH4(+). It catalyses the reaction D-glutamate + O2 + H2O = H2O2 + 2-oxoglutarate + NH4(+). Its activity is regulated as follows. Not inhibited by potassium bromide or thiolactomycin. In terms of biological role, selectively catalyzes the oxidative deamination of acidic amino acids. May play a role in the egg-laying events and early development of the worm, in addition to quality control of the germ cells. The polypeptide is D-aspartate oxidase 1 (ddo-1) (Caenorhabditis elegans).